A 1019-amino-acid chain; its full sequence is Photoactivated adenylate cyclase subunit alpha-like protein 1224-5/1F (1019 aa).

One can recognise a BLUF 1 domain in the interval 55-148; that stretch reads LRRLMYLSAS…GRMYGWWHLK (94 aa). The region spanning 204-332 is the Guanylate cyclase 1 domain; that stretch reads VVTVIYLVEF…DWINSASRIT (129 aa). The 93-residue stretch at 467–559 folds into the BLUF 2 domain; it reads LITLTYISQA…GVYGSPLDMT (93 aa). The region spanning 615–744 is the Guanylate cyclase 2 domain; it reads VMLATAISSF…EVRARVLEVE (130 aa). Positions 825-863 are disordered; that stretch reads NISCRGGNPPAGGIPTSPKVRPPGRTNSVSSYTPDPKQA.

It belongs to the adenylyl cyclase class-4/guanylyl cyclase family. As to quaternary structure, heterotetramer of two alpha and two beta subunits.

The protein resides in the cell projection. The protein localises to the cilium. Its subcellular location is the flagellum. The protein is Photoactivated adenylate cyclase subunit alpha-like protein 1224-5/1F of Euglena gracilis.